A 284-amino-acid polypeptide reads, in one-letter code: Bifunctional protein FolD (284 aa).

Residues 166–168 (GAS) and I232 each bind NADP(+).

This sequence belongs to the tetrahydrofolate dehydrogenase/cyclohydrolase family. In terms of assembly, homodimer.

It catalyses the reaction (6R)-5,10-methylene-5,6,7,8-tetrahydrofolate + NADP(+) = (6R)-5,10-methenyltetrahydrofolate + NADPH. It carries out the reaction (6R)-5,10-methenyltetrahydrofolate + H2O = (6R)-10-formyltetrahydrofolate + H(+). It participates in one-carbon metabolism; tetrahydrofolate interconversion. In terms of biological role, catalyzes the oxidation of 5,10-methylenetetrahydrofolate to 5,10-methenyltetrahydrofolate and then the hydrolysis of 5,10-methenyltetrahydrofolate to 10-formyltetrahydrofolate. The chain is Bifunctional protein FolD from Shewanella sediminis (strain HAW-EB3).